The primary structure comprises 59 residues: Potassium channel toxin alpha-KTx 1.14 (59 aa).

The first 22 residues, 1-22 (MKKISFLLLLAIVICSIGWTDG), serve as a signal peptide directing secretion. At Q23 the chain carries Pyrrolidone carboxylic acid. Cystine bridges form between C29–C50, C35–C55, and C39–C57.

This sequence belongs to the short scorpion toxin superfamily. Potassium channel inhibitor family. Alpha-KTx 01 subfamily. Expressed by the venom gland.

Its subcellular location is the secreted. Functionally, potent blocker of both large-conductance calcium-activated potassium channels (KCa1.1/KCNMA1) and voltage-gated potassium channels (Kv1.3/KCNA3 and ERG1/Kv11.1/KCNH2). This is Potassium channel toxin alpha-KTx 1.14 from Olivierus martensii (Manchurian scorpion).